The following is a 251-amino-acid chain: MTRSFFVGGNWKLNPTSLSAAKALVEALNKADLDPSTEVVVAPPALYLLPIQEIAGKAVKVAAQNAYFKESGAFTGEISPKQISDAGIPYVILGHSERRTLFHETSEVVALKTRAALDNGLKVILCIGETLKEREEGRTAAVCEEQLSAVVKQLKEEDWSNIVIAYEPVWAIGTGKVATTSQAQETHVDVRKYLATAVSPKVASETRVIYGGSVNAANSKDLASQQDIDGFLVGGASLKPEFVDIINARKA.

Residues Asn10 and Lys12 each coordinate substrate. His95 acts as the Electrophile in catalysis. Glu167 serves as the catalytic Proton acceptor.

This sequence belongs to the triosephosphate isomerase family. Homodimer.

It catalyses the reaction D-glyceraldehyde 3-phosphate = dihydroxyacetone phosphate. The protein operates within carbohydrate biosynthesis; gluconeogenesis. Its pathway is carbohydrate degradation; glycolysis; D-glyceraldehyde 3-phosphate from glycerone phosphate: step 1/1. This Coprinopsis cinerea (strain Okayama-7 / 130 / ATCC MYA-4618 / FGSC 9003) (Inky cap fungus) protein is Triosephosphate isomerase (TPI).